The primary structure comprises 331 residues: Pantothenate kinase (331 aa).

An ATP-binding site is contributed by 109-116 (GSVAVGKS).

It belongs to the prokaryotic pantothenate kinase family.

Its subcellular location is the cytoplasm. It carries out the reaction (R)-pantothenate + ATP = (R)-4'-phosphopantothenate + ADP + H(+). It functions in the pathway cofactor biosynthesis; coenzyme A biosynthesis; CoA from (R)-pantothenate: step 1/5. The protein is Pantothenate kinase of Rhizobium meliloti (strain 1021) (Ensifer meliloti).